The primary structure comprises 64 residues: Large ribosomal subunit protein bL35 (64 aa).

Belongs to the bacterial ribosomal protein bL35 family.

The chain is Large ribosomal subunit protein bL35 from Carboxydothermus hydrogenoformans (strain ATCC BAA-161 / DSM 6008 / Z-2901).